The primary structure comprises 367 residues: MKPFLRSQLERYAQRLQELDFLLSREDIMADMQQYRSISREHAEVTQVAGRYARYQQREADLAGAREMLEDPDMAEMAQEEIHAAETELVQLEDELQRLLLPKDPDDERNAFIEIRAGTGGDESALFAGDLARMYTRYAATVGWKVEVMSANESEIGGYKEVVLRIEGQPGTGPSGSGVYGALKFESGGHRVQRVPATETQGRIHTSACTVAVMPEPDEHQAITLNPADLRIDTFRASGAGGQHINKTDSAVRVVHLPTGIVAECQDGRSQHSNKAKALQVLQARIQEKERSERAAKEAALRKGLIGSGDRSDRIRTYNFPQGRLTDHRINLTLYKLLAIMEGDLGEVLQALQHAREAELLAELGLE.

The residue at position 243 (glutamine 243) is an N5-methylglutamine.

The protein belongs to the prokaryotic/mitochondrial release factor family. Post-translationally, methylated by PrmC. Methylation increases the termination efficiency of RF1.

It is found in the cytoplasm. In terms of biological role, peptide chain release factor 1 directs the termination of translation in response to the peptide chain termination codons UAG and UAA. The protein is Peptide chain release factor 1 of Acidovorax ebreus (strain TPSY) (Diaphorobacter sp. (strain TPSY)).